A 267-amino-acid chain; its full sequence is tRNA pseudouridine synthase A (267 aa).

Asp55 serves as the catalytic Nucleophile. Tyr111 serves as a coordination point for substrate.

The protein belongs to the tRNA pseudouridine synthase TruA family.

The enzyme catalyses uridine(38/39/40) in tRNA = pseudouridine(38/39/40) in tRNA. In terms of biological role, formation of pseudouridine at positions 38, 39 and 40 in the anticodon stem and loop of transfer RNAs. This chain is tRNA pseudouridine synthase A, found in Thermococcus onnurineus (strain NA1).